A 527-amino-acid polypeptide reads, in one-letter code: Catalase (527 aa).

Residues 1-22 (MADSRDPASDQMKHWKEERAAQ) show a composition bias toward basic and acidic residues. Positions 1–32 (MADSRDPASDQMKHWKEERAAQKPDVLTTAGG) are disordered. Ala-2 carries the post-translational modification N-acetylalanine. Ser-9 carries the phosphoserine modification. Lys-13 bears the N6-succinyllysine mark. Catalysis depends on residues His-75 and Asn-148. The NADP(+) site is built by His-194, Ser-201, Arg-203, and Asn-213. Position 221 is an N6-succinyllysine (Lys-221). At Lys-233 the chain carries N6-acetyllysine. The NADP(+) site is built by Lys-237, Trp-303, His-305, and Lys-306. An N6-acetyllysine; alternate modification is found at Lys-306. Residue Lys-306 is modified to N6-succinyllysine; alternate. Tyr-358 contributes to the heme binding site. The residue at position 434 (Ser-434) is a Phosphoserine. The residue at position 480 (Lys-480) is an N6-acetyllysine; alternate. Lys-480 carries the post-translational modification N6-succinyllysine; alternate. Lys-499 carries the post-translational modification N6-acetyllysine. Residue Thr-511 is modified to Phosphothreonine. Ser-517 bears the Phosphoserine mark. Position 522 is an N6-succinyllysine (Lys-522). The Microbody targeting signal; atypical motif lies at 524–527 (KANL).

This sequence belongs to the catalase family. In terms of assembly, homotetramer. Interacts (via microbody targeting signal) with PEX5, monomeric form interacts with PEX5, leading to its translocation into peroxisomes. Heme serves as cofactor. NADP(+) is required as a cofactor.

Its subcellular location is the peroxisome matrix. It catalyses the reaction 2 H2O2 = O2 + 2 H2O. In terms of biological role, catalyzes the degradation of hydrogen peroxide (H(2)O(2)) generated by peroxisomal oxidases to water and oxygen, thereby protecting cells from the toxic effects of hydrogen peroxide. Promotes growth of cells including T-cells, B-cells, myeloid leukemia cells, melanoma cells, mastocytoma cells and normal and transformed fibroblast cells. This chain is Catalase (CAT), found in Cavia porcellus (Guinea pig).